We begin with the raw amino-acid sequence, 244 residues long: L-xylulose reductase (244 aa).

Residue methionine 1 is modified to N-acetylmethionine. 11–39 (LVTGAGKGIGRSTVLALKAAGAQVVAVSR) contributes to the NADP(+) binding site. Residue arginine 21 is modified to Omega-N-methylarginine. Serine 136 is a substrate binding site. Tyrosine 149 (proton acceptor) is an active-site residue. The active site involves lysine 153.

The protein belongs to the short-chain dehydrogenases/reductases (SDR) family. As to quaternary structure, homotetramer. Highly expressed in kidney and liver. Expressed in epididymis. Expressed at intermediate level in lung. Weakly expressed in brain, heart, spleen and testis.

The protein localises to the membrane. It carries out the reaction xylitol + NADP(+) = L-xylulose + NADPH + H(+). Its function is as follows. Catalyzes the NADPH-dependent reduction of several pentoses, tetroses, trioses, alpha-dicarbonyl compounds and L-xylulose. Participates in the uronate cycle of glucose metabolism. May play a role in the water absorption and cellular osmoregulation in the proximal renal tubules by producing xylitol, an osmolyte, thereby preventing osmolytic stress from occurring in the renal tubules. The polypeptide is L-xylulose reductase (DCXR) (Cavia porcellus (Guinea pig)).